We begin with the raw amino-acid sequence, 277 residues long: NH(3)-dependent NAD(+) synthetase (277 aa).

46–53 contributes to the ATP binding site; that stretch reads GISGGQDS. Residue Asp52 coordinates Mg(2+). A deamido-NAD(+)-binding site is contributed by Arg142. Thr162 is an ATP binding site. Residue Glu167 coordinates Mg(2+). Deamido-NAD(+)-binding residues include Lys175 and Asp182. 2 residues coordinate ATP: Lys191 and Thr213. A deamido-NAD(+)-binding site is contributed by 263-264; sequence HK.

The protein belongs to the NAD synthetase family. In terms of assembly, homodimer.

The catalysed reaction is deamido-NAD(+) + NH4(+) + ATP = AMP + diphosphate + NAD(+) + H(+). Its pathway is cofactor biosynthesis; NAD(+) biosynthesis; NAD(+) from deamido-NAD(+) (ammonia route): step 1/1. Its function is as follows. Catalyzes the ATP-dependent amidation of deamido-NAD to form NAD. Uses ammonia as a nitrogen source. The sequence is that of NH(3)-dependent NAD(+) synthetase from Corynebacterium glutamicum (strain ATCC 13032 / DSM 20300 / JCM 1318 / BCRC 11384 / CCUG 27702 / LMG 3730 / NBRC 12168 / NCIMB 10025 / NRRL B-2784 / 534).